The primary structure comprises 349 residues: MMSAEETVTQNAPNTVQDQVEASVDAAVHASAEQSNTPAQQADDFRVFVGRLSTSTKKSEIRSLFETVGTVRKVTIPFRRVRRGTRLVPSGIAFVTFNNQEDVDKAIETLNGKTLDDREIVVQKARPVQEQPIKDRKKSKNKNGEEPETSTSVENAESAKGSSDENEANTATAPSSNEANGVDKKQNEIKGKGGSGKNKAKPLPPNSIYVSGLSVTLTNEGLKEMFDAYNPTRARIAVRSLPPYIIRRIKLRGEQRRGRGFGFVSFANAEDQSRAIEEMNGKQVGDLTLVVKSAVFREDKQNDENEKNENEPIEASESAPTNVSDSTEPKASEVDSEEKSGVTASAITA.

One can recognise an RRM 1 domain in the interval 45-127 (FRVFVGRLST…REIVVQKARP (83 aa)). Disordered regions lie at residues 121-208 (VVQK…PNSI) and 298-349 (EDKQ…AITA). At Ser152 the chain carries Phosphoserine. A compositionally biased stretch (polar residues) spans 168–179 (ANTATAPSSNEA). A compositionally biased stretch (basic and acidic residues) spans 181-191 (GVDKKQNEIKG). In terms of domain architecture, RRM 2 spans 206-296 (NSIYVSGLSV…LTLVVKSAVF (91 aa)). 2 stretches are compositionally biased toward basic and acidic residues: residues 298–310 (EDKQNDENEKNEN) and 327–340 (TEPKASEVDSEEKS).

The protein localises to the cytoplasm. It localises to the nucleus. Its subcellular location is the chromosome. The protein resides in the telomere. Functionally, binds single-stranded telomeric sequences of the type (TG[1-3])n in vitro. Has a role in meiosis. This chain is Single-stranded TG1-3 DNA-binding protein (tcg1), found in Schizosaccharomyces pombe (strain 972 / ATCC 24843) (Fission yeast).